The chain runs to 81 residues: Elsinochrome C biosynthesis cluster protein SNOG_08613 (81 aa).

Part of the gene cluster that mediates the biosynthesis of elsinochrome C, a perelyenequinone phytotoxin structurally similar to cercosporin. The first step of elsinochrome C biosynthesis is performed by the polyketide synthase elcA which catalyzes the formation of nor-toralactone. The starter unit acyltransferase (SAT) domain of elcA initiates polyketide extension by the selective utilization of acetyl-CoA, which is elongated to the heptaketide in the beta-ketoacyl synthase (KS) domain by successive condensations with six malonyl units introduced by the malonyl acyltransferase (MAT) domain. The product template (PT) domain catalyzes C4-C9 and C2-C11 aldol cyclizations and dehydrations to a trihydroxynaphthalene, which is thought to be delivered to the thioesterase (TE) domain for product release. The bifunctional enzyme elcB then methylates nor-toralactone to toralactone before conducting an unusual oxidative aromatic ring opening. The next step in perylenequinone biosynthesis is an O-methylation at the nascent OH-6 of the elcB product performed by the O-methyltransferase elcD. The oxidative coupling of the two monomeric naphthol units in perylenequinone biosynthesis is catalyzed by the FAD-dependent monooxygenase elcE and the multicopper oxidase elcG. ElcG might catalyze the first intermolecular coupling in a regio- and stereo-selective manner via a phenol radical coupling mechanism and the elcE could forge the second C-C bond intramolecularly via a hydride transfer mechanism. The fasciclin domain-containing protein elcF might also play a role duting this step. The last piece of the puzzle in the biosynthesis of elsinochrome C is the additional annulation by enolate coupling to afford the dihydrobenzo(ghi)perylenequinone system, catalyzed by the FAD-dependent monooxygenase elcH. The polypeptide is Elsinochrome C biosynthesis cluster protein SNOG_08613 (Phaeosphaeria nodorum (strain SN15 / ATCC MYA-4574 / FGSC 10173) (Glume blotch fungus)).